The chain runs to 201 residues: Probable cytokinin riboside 5'-monophosphate phosphoribohydrolase LOG6 (201 aa).

Residues Glu89, 107 to 108, 124 to 130, and Thr136 contribute to the substrate site; these read RK and GYGTLEE.

This sequence belongs to the LOG family.

The catalysed reaction is N(6)-(dimethylallyl)adenosine 5'-phosphate + H2O = N(6)-dimethylallyladenine + D-ribose 5-phosphate. It catalyses the reaction 9-ribosyl-trans-zeatin 5'-phosphate + H2O = trans-zeatin + D-ribose 5-phosphate. In terms of biological role, cytokinin-activating enzyme working in the direct activation pathway. Phosphoribohydrolase that converts inactive cytokinin nucleotides to the biologically active free-base forms. This Arabidopsis thaliana (Mouse-ear cress) protein is Probable cytokinin riboside 5'-monophosphate phosphoribohydrolase LOG6 (LOG6).